The following is a 132-amino-acid chain: Myelin P2 protein (132 aa).

At serine 2 the chain carries N-acetylserine. Residues arginine 107 and 127 to 129 contribute to the (9Z)-octadecenoate site; that span reads RIY. Residues arginine 107 and 127 to 129 each bind hexadecanoate; that span reads RIY.

Belongs to the calycin superfamily. Fatty-acid binding protein (FABP) family. In terms of assembly, monomer.

The protein resides in the cytoplasm. Its function is as follows. May play a role in lipid transport protein in Schwann cells. May bind cholesterol. This Oryctolagus cuniculus (Rabbit) protein is Myelin P2 protein (PMP2).